An 869-amino-acid polypeptide reads, in one-letter code: Bifunctional uridylyltransferase/uridylyl-removing enzyme (869 aa).

Residues 1–331 (MPTNLPALPM…FPSESQVTRV (331 aa)) form a uridylyltransferase region. The segment at 332-688 (INERFVERQG…ARISPAGEGL (357 aa)) is uridylyl-removing. Residues 450-572 (VDQHILMVVR…VGDERHLTAL (123 aa)) form the HD domain. ACT domains are found at residues 689–773 (QVAV…PSQG) and 800–869 (LLSL…ALEI).

Belongs to the GlnD family. Mg(2+) is required as a cofactor.

It carries out the reaction [protein-PII]-L-tyrosine + UTP = [protein-PII]-uridylyl-L-tyrosine + diphosphate. The catalysed reaction is [protein-PII]-uridylyl-L-tyrosine + H2O = [protein-PII]-L-tyrosine + UMP + H(+). Its activity is regulated as follows. Uridylyltransferase (UTase) activity is inhibited by glutamine, while glutamine activates uridylyl-removing (UR) activity. In terms of biological role, modifies, by uridylylation and deuridylylation, the PII regulatory proteins (GlnB and homologs), in response to the nitrogen status of the cell that GlnD senses through the glutamine level. Under low glutamine levels, catalyzes the conversion of the PII proteins and UTP to PII-UMP and PPi, while under higher glutamine levels, GlnD hydrolyzes PII-UMP to PII and UMP (deuridylylation). Thus, controls uridylylation state and activity of the PII proteins, and plays an important role in the regulation of nitrogen assimilation and metabolism. The polypeptide is Bifunctional uridylyltransferase/uridylyl-removing enzyme (Cupriavidus pinatubonensis (strain JMP 134 / LMG 1197) (Cupriavidus necator (strain JMP 134))).